The sequence spans 596 residues: Leucine zipper putative tumor suppressor 1 (596 aa).

G2 carries the N-myristoyl glycine lipid modification. Disordered regions lie at residues 136-193 and 295-324; these read AILH…SYQL and YEER…SQKS. A compositionally biased stretch (basic and acidic residues) spans 153 to 162; sequence PPDKPKEQEL. The segment covering 178–190 has biased composition (low complexity); the sequence is SMSSLPTHSTSSS. Residues 256-374 adopt a coiled-coil conformation; the sequence is ISTDECSIQE…SYEREKTSFG (119 aa). Over residues 295-310 the composition is skewed to basic and acidic residues; the sequence is YEERPRRCRDELEGPE.

This sequence belongs to the LZTS family. As to quaternary structure, binds EEF1G, TLK2 and CDK1. Post-translationally, phosphorylated on serine residues. Hyperphosphorylated by the cAMP-dependent kinase PKA during cell-cycle progression. As to expression, highly expressed in testis, prostate, spleen, thymus, ovary and brain. Detected at lower levels in heart, placenta, small intestine, colon, liver, kidney, skeletal muscle and pancreas. Not detectable in primary tumors from breast and prostate and in many cancer cell lines.

The protein resides in the cytoplasm. Its subcellular location is the cell membrane. It is found in the cell projection. It localises to the dendritic spine. The protein localises to the postsynaptic density. The protein resides in the synapse. Functionally, involved in the regulation of cell growth. May stabilize the active CDC2-cyclin B1 complex and thereby contribute to the regulation of the cell cycle and the prevention of uncontrolled cell proliferation. May act as a tumor suppressor. This Homo sapiens (Human) protein is Leucine zipper putative tumor suppressor 1 (LZTS1).